A 207-amino-acid polypeptide reads, in one-letter code: MNNLTAIVLAGGQSSRMGQDKALITVQGVPLLQFVCNIAASCAEIVYIVTPWPERYEHLVLPRCQFIPEAGTQGPLIGFAQGLAQVKSEWVLLLACDLPKLRVEVLQEWAANLDSVPEEAIATLPHHAKGWEPLCGFYRRRCSPPLLEFIHQGGRSFQQWLQHHSVQVLALPTPEILFNCNTPEDLAVIQGEFDDLSPNPSPTRRGA.

GTP contacts are provided by residues 9-11, Lys-21, and Asp-97; that span reads LAG. Position 97 (Asp-97) interacts with Mg(2+).

This sequence belongs to the MobA family. Requires Mg(2+) as cofactor.

The protein resides in the cytoplasm. It catalyses the reaction Mo-molybdopterin + GTP + H(+) = Mo-molybdopterin guanine dinucleotide + diphosphate. In terms of biological role, transfers a GMP moiety from GTP to Mo-molybdopterin (Mo-MPT) cofactor (Moco or molybdenum cofactor) to form Mo-molybdopterin guanine dinucleotide (Mo-MGD) cofactor. The protein is Probable molybdenum cofactor guanylyltransferase of Trichormus variabilis (strain ATCC 29413 / PCC 7937) (Anabaena variabilis).